A 330-amino-acid chain; its full sequence is Inositol 2-dehydrogenase (330 aa).

The protein belongs to the Gfo/Idh/MocA family.

The catalysed reaction is myo-inositol + NAD(+) = scyllo-inosose + NADH + H(+). It functions in the pathway polyol metabolism; myo-inositol degradation into acetyl-CoA; acetyl-CoA from myo-inositol: step 1/7. Involved in the oxidation of myo-inositol (MI) to 2-keto-myo-inositol (2KMI or 2-inosose). The polypeptide is Inositol 2-dehydrogenase (idhA) (Rhizobium meliloti (strain 1021) (Ensifer meliloti)).